The primary structure comprises 142 residues: Peptide methionine sulfoxide reductase MsrB (142 aa).

The 124-residue stretch at Lys3–Phe126 folds into the MsrB domain. Cys115 (nucleophile) is an active-site residue.

This sequence belongs to the MsrB Met sulfoxide reductase family.

The enzyme catalyses L-methionyl-[protein] + [thioredoxin]-disulfide + H2O = L-methionyl-(R)-S-oxide-[protein] + [thioredoxin]-dithiol. This is Peptide methionine sulfoxide reductase MsrB from Lactococcus lactis subsp. cremoris (strain MG1363).